A 1170-amino-acid chain; its full sequence is Putative DNA topoisomerase 2, mitochondrial (1170 aa).

Residues N106, N135, 163–165 (SSN), 176–183 (GRNGYGAK), and 396–398 (QTK) each bind ATP. A Toprim domain is found at 475–590 (CTLILTEGDS…SLVHTDGFIQ (116 aa)). Mg(2+) contacts are provided by E481, D559, and D561. The Topo IIA-type catalytic domain occupies 722-1157 (IPSLIDGLKP…DWKSVWRSEL (436 aa)). Residue Y813 is the O-(5'-phospho-DNA)-tyrosine intermediate of the active site.

It belongs to the type II topoisomerase family. As to quaternary structure, homodimer. Mg(2+) is required as a cofactor. The cofactor is Mn(2+). It depends on Ca(2+) as a cofactor.

Its subcellular location is the mitochondrion. It carries out the reaction ATP-dependent breakage, passage and rejoining of double-stranded DNA.. Its function is as follows. Control of topological states of DNA by transient breakage and subsequent rejoining of DNA strands. Topoisomerase II makes double-strand breaks. The polypeptide is Putative DNA topoisomerase 2, mitochondrial (Caenorhabditis elegans).